The sequence spans 115 residues: Large ribosomal subunit protein bL19 (115 aa).

It belongs to the bacterial ribosomal protein bL19 family.

Functionally, this protein is located at the 30S-50S ribosomal subunit interface and may play a role in the structure and function of the aminoacyl-tRNA binding site. In Buchnera aphidicola subsp. Acyrthosiphon pisum (strain Tuc7), this protein is Large ribosomal subunit protein bL19.